Reading from the N-terminus, the 216-residue chain is Somatotropin (216 aa).

The first 26 residues, 1 to 26 (MATDSRTSWLLTVSLLCLLWPQEASA), serve as a signal peptide directing secretion. Position 45 (His-45) interacts with Zn(2+). Cys-78 and Cys-189 are joined by a disulfide. Ser-131 carries the phosphoserine modification. Glu-198 serves as a coordination point for Zn(2+). Cys-206 and Cys-214 are joined by a disulfide.

Belongs to the somatotropin/prolactin family.

The protein resides in the secreted. Its function is as follows. Plays an important role in growth control. Its major role in stimulating body growth is to stimulate the liver and other tissues to secrete IGF1. It stimulates both the differentiation and proliferation of myoblasts. It also stimulates amino acid uptake and protein synthesis in muscle and other tissues. This chain is Somatotropin (Gh1), found in Mus musculus (Mouse).